The following is a 488-amino-acid chain: MAGRESPPPSAPSMAPISFGFTRTSVRRRLADLGDSERQAPEEKDFLATVEGRKLQSVNPPEAPKELVIPLIQNGSRRQPLSKNPKPSSETSTVLMSDGVLSQAVKELIEESKKSLEERENAGVDPTLTIPMIQKGCTPIEEGSDSEPQAETVPEEADYEAVPVEAYGLAMLRGMGWKPGKGIGNTFSQVVKPRVNSIRPKGLGLGANRMEAQDLASVGSHHPPRPDGDRENDKEGQPQGLMHGRAVVVLSGPYRGLYGKVEGLDPDNVRAMVRLAVGNRIVTVSEYCLRPVSQQEFDSHTSKPGHVSQTSTEQQNRATGTASSLKAAQNQEDSKRRQKGSEKKRKHSPDRQDGPVPKTEKAAPRNKHWLHRDLRVRFIDKLHKSGRYYNTKMTIEDVLSPDTCVCRTDEGRVLEDVREDMLETLIPKGEGHRVMVVLGPHAGKVGLLRSRDRAQSHALVQLRRENQVVELHYNAICQYMGPGDSDED.

Pro residues predominate over residues 1-11 (MAGRESPPPSA). Residues 1–20 (MAGRESPPPSAPSMAPISFG) form a disordered region. Position 2 is an N-acetylalanine (Ala2). The residue at position 25 (Ser25) is a Phosphoserine; by PKA. A disordered region spans residues 72–97 (IQNGSRRQPLSKNPKPSSETSTVLMS). Positions 73–95 (QNGSRRQPLSKNPKPSSETSTVL) are enriched in polar residues. Position 115 is a phosphoserine (Ser115). The 47-residue stretch at 164–210 (VEAYGLAMLRGMGWKPGKGIGNTFSQVVKPRVNSIRPKGLGLGANRM) folds into the G-patch domain. Disordered regions lie at residues 216–241 (ASVG…PQGL) and 295–367 (QEFD…PRNK). The segment covering 224 to 236 (PRPDGDRENDKEG) has biased composition (basic and acidic residues). The KOW 1 domain occupies 231-258 (ENDKEGQPQGLMHGRAVVVLSGPYRGLY). Over residues 307-331 (VSQTSTEQQNRATGTASSLKAAQNQ) the composition is skewed to polar residues. 2 stretches are compositionally biased toward basic and acidic residues: residues 332–341 (EDSKRRQKGS) and 349–363 (PDRQ…EKAA). A KOW 2 domain is found at 401–428 (PDTCVCRTDEGRVLEDVREDMLETLIPK). A Phosphoserine modification is found at Ser485.

It belongs to the MOS2 family. In terms of assembly, component of the minor spliceosome, which splices U12-type introns. Interacts with PRKX, PRKACB and DHX16. In terms of processing, phosphorylation regulates its ability to bind RNA.

Its subcellular location is the nucleus. Its function is as follows. RNA-binding protein involved in pre-mRNA splicing. As a component of the minor spliceosome, involved in the splicing of U12-type introns in pre-mRNAs. The protein is G-patch domain and KOW motifs-containing protein (Gpkow) of Mus musculus (Mouse).